Reading from the N-terminus, the 323-residue chain is Beta-ketoacyl-[acyl-carrier-protein] synthase III (323 aa).

Active-site residues include Cys-114 and His-250. Residues 251 to 255 (QANKR) are ACP-binding. Asn-280 is a catalytic residue.

It belongs to the thiolase-like superfamily. FabH family. Homodimer.

It localises to the cytoplasm. It catalyses the reaction malonyl-[ACP] + acetyl-CoA + H(+) = 3-oxobutanoyl-[ACP] + CO2 + CoA. The protein operates within lipid metabolism; fatty acid biosynthesis. Catalyzes the condensation reaction of fatty acid synthesis by the addition to an acyl acceptor of two carbons from malonyl-ACP. Catalyzes the first condensation reaction which initiates fatty acid synthesis and may therefore play a role in governing the total rate of fatty acid production. Possesses both acetoacetyl-ACP synthase and acetyl transacylase activities. Its substrate specificity determines the biosynthesis of branched-chain and/or straight-chain of fatty acids. The chain is Beta-ketoacyl-[acyl-carrier-protein] synthase III from Hyphomonas neptunium (strain ATCC 15444).